A 64-amino-acid polypeptide reads, in one-letter code: Neuropeptide-like 4 (64 aa).

An N-terminal signal peptide occupies residues 1 to 18 (MFKLLVVVFAALFAAALA). 2 consecutive propeptides follow at residues 19–40 (VPAP…EPAP) and 63–64 (YG).

The protein localises to the secreted. The protein is Neuropeptide-like 4 (Nplp4) of Drosophila melanogaster (Fruit fly).